A 611-amino-acid chain; its full sequence is Leucine aminopeptidase 2 (611 aa).

Residues 135–137 and 265–270 contribute to the a peptide site; these read QCQ and PYGGME. A Zn(2+)-binding site is contributed by His-294. Residue Glu-295 is the Proton acceptor of the active site. Residues His-298 and Glu-317 each coordinate Zn(2+). Residue Tyr-383 is the Proton donor of the active site.

This sequence belongs to the peptidase M1 family. Zn(2+) is required as a cofactor.

Its subcellular location is the cytoplasm. The protein localises to the nucleus. It carries out the reaction an epoxide + H2O = an ethanediol. In terms of biological role, aminopeptidase that preferentially cleaves di- and tripeptides. Also has low epoxide hydrolase activity (in vitro). Can hydrolyze the epoxide leukotriene LTA(4) but it forms preferentially 5,6-dihydroxy-7,9,11,14-eicosatetraenoic acid rather than the cytokine leukotriene B(4) as the product compared to the homologous mammalian enzyme (in vitro). The sequence is that of Leucine aminopeptidase 2 from Chaetomium globosum (strain ATCC 6205 / CBS 148.51 / DSM 1962 / NBRC 6347 / NRRL 1970) (Soil fungus).